Consider the following 264-residue polypeptide: S-adenosylmethionine decarboxylase proenzyme (264 aa).

Residue Ser-113 is the Schiff-base intermediate with substrate; via pyruvic acid of the active site. Ser-113 carries the post-translational modification Pyruvic acid (Ser); by autocatalysis. His-118 acts as the Proton acceptor; for processing activity in catalysis. The Proton donor; for catalytic activity role is filled by Cys-141.

This sequence belongs to the prokaryotic AdoMetDC family. Type 2 subfamily. In terms of assembly, heterooctamer of four alpha and four beta chains arranged as a tetramer of alpha/beta heterodimers. The cofactor is pyruvate. Is synthesized initially as an inactive proenzyme. Formation of the active enzyme involves a self-maturation process in which the active site pyruvoyl group is generated from an internal serine residue via an autocatalytic post-translational modification. Two non-identical subunits are generated from the proenzyme in this reaction, and the pyruvate is formed at the N-terminus of the alpha chain, which is derived from the carboxyl end of the proenzyme. The post-translation cleavage follows an unusual pathway, termed non-hydrolytic serinolysis, in which the side chain hydroxyl group of the serine supplies its oxygen atom to form the C-terminus of the beta chain, while the remainder of the serine residue undergoes an oxidative deamination to produce ammonia and the pyruvoyl group blocking the N-terminus of the alpha chain.

It catalyses the reaction S-adenosyl-L-methionine + H(+) = S-adenosyl 3-(methylsulfanyl)propylamine + CO2. It participates in amine and polyamine biosynthesis; S-adenosylmethioninamine biosynthesis; S-adenosylmethioninamine from S-adenosyl-L-methionine: step 1/1. Its function is as follows. Catalyzes the decarboxylation of S-adenosylmethionine to S-adenosylmethioninamine (dcAdoMet), the propylamine donor required for the synthesis of the polyamines spermine and spermidine from the diamine putrescine. This is S-adenosylmethionine decarboxylase proenzyme from Pseudomonas paraeruginosa (strain DSM 24068 / PA7) (Pseudomonas aeruginosa (strain PA7)).